Here is a 302-residue protein sequence, read N- to C-terminus: Sulfate adenylyltransferase subunit 2 (302 aa).

The segment at 280 to 302 (RQGRLIDSDQSASMEQKKRQGYF) is disordered.

It belongs to the PAPS reductase family. CysD subfamily. In terms of assembly, heterodimer composed of CysD, the smaller subunit, and CysN.

It carries out the reaction sulfate + ATP + H(+) = adenosine 5'-phosphosulfate + diphosphate. Its pathway is sulfur metabolism; hydrogen sulfide biosynthesis; sulfite from sulfate: step 1/3. With CysN forms the ATP sulfurylase (ATPS) that catalyzes the adenylation of sulfate producing adenosine 5'-phosphosulfate (APS) and diphosphate, the first enzymatic step in sulfur assimilation pathway. APS synthesis involves the formation of a high-energy phosphoric-sulfuric acid anhydride bond driven by GTP hydrolysis by CysN coupled to ATP hydrolysis by CysD. This is Sulfate adenylyltransferase subunit 2 from Shewanella baltica (strain OS195).